The sequence spans 370 residues: CST complex subunit STN1 (370 aa).

An interaction with CTC1 region spans residues 1-187 (MESNSSQCED…KVYDQPFHSP (187 aa)). Residues 57-157 (VDILGTVIGV…EIHATTYYKV (101 aa)) constitute a DNA-binding region (OB). Winged helix-turn-helix (wHTH) stretches follow at residues 193 to 297 (EALS…YVTR) and 298 to 370 (EDKE…YTAF).

This sequence belongs to the STN1 family. As to quaternary structure, component of the CST complex, composed of TEN1/C17orf106, CTC1/C17orf68 and STN1; in the complex interacts directly with TEN1 and CTC1. Interacts with ACD/TPP1, POT1 and POLA1.

The protein localises to the nucleus. The protein resides in the chromosome. It is found in the telomere. In terms of biological role, component of the CST complex proposed to act as a specialized replication factor promoting DNA replication under conditions of replication stress or natural replication barriers such as the telomere duplex. The CST complex binds single-stranded DNA with high affinity in a sequence-independent manner, while isolated subunits bind DNA with low affinity by themselves. Initially the CST complex has been proposed to protect telomeres from DNA degradation. However, the CST complex has been shown to be involved in several aspects of telomere replication. The CST complex inhibits telomerase and is involved in telomere length homeostasis; it is proposed to bind to newly telomerase-synthesized 3' overhangs and to terminate telomerase action implicating the association with the ACD:POT1 complex thus interfering with its telomerase stimulation activity. The CST complex is also proposed to be involved in fill-in synthesis of the telomeric C-strand probably implicating recruitment and activation of DNA polymerase alpha. The CST complex facilitates recovery from many forms of exogenous DNA damage; seems to be involved in the re-initiation of DNA replication at repaired forks and/or dormant origins. Required for efficicient replication of the duplex region of the telomere. Promotes efficient replication of lagging-strand telomeres. Promotes general replication start following replication-fork stalling implicating new origin firing. May be in involved in C-strand fill-in during late S/G2 phase independent of its role in telomere duplex replication. This Bos taurus (Bovine) protein is CST complex subunit STN1.